The following is a 271-amino-acid chain: uncharacterized protein (271 aa).

Helical transmembrane passes span 11–33 (GWLA…LAPW), 172–194 (SINT…LQLI), and 214–236 (FLSY…GYFA). A disordered region spans residues 245-271 (REKAGSPPPDKPMTVEQKLADRYGRRR). Positions 262 to 271 (KLADRYGRRR) are enriched in basic and acidic residues.

This sequence belongs to the SURF1 family.

The protein localises to the cell membrane. This is an uncharacterized protein from Mycobacterium tuberculosis (strain CDC 1551 / Oshkosh).